The chain runs to 473 residues: METPTPLPPVPASPTCNPAPRTIQIEFPQHSSSLLESLNRHRLEGKFCDVSLLVQGRELRAHKAVLAAASPYFHDKLLLGDAPRLTLPSVIEADAFEGLLQLIYSGRLRLPLDALPAHLLVASGLQMWQVVDQCSEILRELETSGGGISARGGNSYHALLSTTSSTGGWCIRSSPFQTPVQSSASTESPASTESPVGGEGSELGEVLQIQVEEEEEEEEDDDDEDQGSATLSQTPQPQRVSGVFPRPHGPHPLPMTATPRKLPEGESAPLELPAPPALPPKIFYIKQEPFEPKEEISGSGTQPGGAKEETKVFSGGDTEGNGELGFLLPSGPGPTSGGGGPSWKPVDLHGNEILSGGGGPGGAGQAVHGPVKLGGTPPADGKRFGCLCGKRFAVKPKRDRHIMLTFSLRPFGCGICNKRFKLKHHLTEHMKTHAGALHACPHCGRRFRVHACFLRHRDLCKGQGWATAHWTYK.

Residues 48-112 (CDVSLLVQGR…IYSGRLRLPL (65 aa)) enclose the BTB domain. A disordered region spans residues 177-279 (QTPVQSSAST…LELPAPPALP (103 aa)). Positions 182-196 (SSASTESPASTESPV) are enriched in low complexity. Positions 211–226 (VEEEEEEEEDDDDEDQ) are enriched in acidic residues. Residues 227–239 (GSATLSQTPQPQR) show a composition bias toward polar residues. K286 participates in a covalent cross-link: Glycyl lysine isopeptide (Lys-Gly) (interchain with G-Cter in SUMO1); alternate. A Glycyl lysine isopeptide (Lys-Gly) (interchain with G-Cter in SUMO2); alternate cross-link involves residue K286. Residues K293 and K307 each participate in a glycyl lysine isopeptide (Lys-Gly) (interchain with G-Cter in SUMO2) cross-link. Residues 293 to 376 (KEEISGSGTQ…VHGPVKLGGT (84 aa)) are disordered. A compositionally biased stretch (gly residues) spans 355–364 (SGGGGPGGAG). K382 participates in a covalent cross-link: Glycyl lysine isopeptide (Lys-Gly) (interchain with G-Cter in SUMO2). Residues 411 to 433 (FGCGICNKRFKLKHHLTEHMKTH) form a C2H2-type 1 zinc finger. Residues 438–460 (HACPHCGRRFRVHACFLRHRDLC) form a C2H2-type 2; atypical zinc finger.

It localises to the nucleus. Functionally, may be involved in transcriptional regulation. This is Zinc finger and BTB domain-containing protein 9 (ZBTB9) from Homo sapiens (Human).